A 473-amino-acid chain; its full sequence is Serine palmitoyltransferase 1 (473 aa).

At M1 to Q15 the chain is on the lumenal side. Positions M1–P66 are interaction with SPTLC2. The helical transmembrane segment at A16 to I36 threads the bilayer. Residues R37 to L473 are Cytoplasmic-facing. At Y164 the chain carries Phosphotyrosine; by ABL.

It belongs to the class-II pyridoxal-phosphate-dependent aminotransferase family. Component of the serine palmitoyltransferase (SPT) complex, which is also composed of SPTLC2 or SPTLC3 and SPTSSA or SPTSSB. The heterodimer with SPTLC2 or SPTLC3 forms the catalytic core of the enzyme, while SPTSSA or SPTSSB subunits determine substrate specificity. SPT also interacts with ORMDL proteins, especially ORMDL3, which negatively regulate SPT activity in the presence of ceramides. Forms dimers of heterodimers with SPTLC2. Interacts with RTN4. The cofactor is pyridoxal 5'-phosphate. Post-translationally, phosphorylation at Tyr-164 inhibits activity and promotes cell survival.

Its subcellular location is the endoplasmic reticulum membrane. It carries out the reaction L-serine + hexadecanoyl-CoA + H(+) = 3-oxosphinganine + CO2 + CoA. The enzyme catalyses octadecanoyl-CoA + L-serine + H(+) = 3-oxoeicosasphinganine + CO2 + CoA. The catalysed reaction is tetradecanoyl-CoA + L-serine + H(+) = 3-oxohexadecasphinganine + CO2 + CoA. It catalyses the reaction dodecanoyl-CoA + L-serine + H(+) = 3-oxotetradecasphinganine + CO2 + CoA. It functions in the pathway lipid metabolism; sphingolipid metabolism. SPT complex catalytic activity is negatively regulated by ORMDL proteins, including ORMDL3, in the presence of ceramides. This mechanism allows to maintain ceramide levels at sufficient concentrations for the production of complex sphingolipids, but which prevents the accumulation of ceramides to levels that trigger apoptosis. In terms of biological role, component of the serine palmitoyltransferase multisubunit enzyme (SPT) that catalyzes the initial and rate-limiting step in sphingolipid biosynthesis by condensing L-serine and activated acyl-CoA (most commonly palmitoyl-CoA) to form long-chain bases. The SPT complex is also composed of SPTLC2 or SPTLC3 and SPTSSA or SPTSSB. Within this complex, the heterodimer with SPTLC2 or SPTLC3 forms the catalytic core. The composition of the serine palmitoyltransferase (SPT) complex determines the substrate preference. The SPTLC1-SPTLC2-SPTSSA complex shows a strong preference for C16-CoA substrate, while the SPTLC1-SPTLC3-SPTSSA isozyme uses both C14-CoA and C16-CoA as substrates, with a slight preference for C14-CoA. The SPTLC1-SPTLC2-SPTSSB complex shows a strong preference for C18-CoA substrate, while the SPTLC1-SPTLC3-SPTSSB isozyme displays an ability to use a broader range of acyl-CoAs, without apparent preference. Required for adipocyte cell viability and metabolic homeostasis. The polypeptide is Serine palmitoyltransferase 1 (SPTLC1) (Macaca fascicularis (Crab-eating macaque)).